Here is a 585-residue protein sequence, read N- to C-terminus: MTSINEQLTNYFIQALVKAFGAEFSDIDPIVVPASNPKFGDYQANIALSLAKKLGEQPRAIAQKIIDNLSLEDLGELPTIAGPGFINIKIKPTYLATQLKVQQNSSSLGVTKADPIEKIIVDFSSPNIAKEMHVGHLRSTIIGDCIARILEVRGHQVLRLNHVGDWGTQFGMLIAYLAEVYPDALTTADALDIGDLVTFYKQAKKRFDEDEKFQETARNQVVKLQAGDSQTRHAWQLLCEQSRREFQVIYDILDINITERGESFYNPLLEDIIKELDHQGLLKKDAGAQCVFLDGFTNKSGDPLPLIVQKSDGGYNYATTDLAALKYRITQDQAERIIYVTDAGQANHFAQVFQVAKKAHIIPKNVEIIHVPFGLVKGEDGKKLKTRSGTTIKLRDLLDEAVIYARQDLEKRLAEEGRQESEDFIANVSQVVGISAVKYADLSQNRTSDYIFSYDKMLALQGNTAPYMLYAYARIQSISREGNIDFESLQQEAKIILQEETEIELGKYLLQLSEVIEEVEKTLLPNRLCDYLYELSKKFNRFYENCPVLKSEEPLRTSRLLLCDLTARTLKLGLSLLGIPVLERM.

The 'HIGH' region motif lies at proline 126–histidine 136.

Belongs to the class-I aminoacyl-tRNA synthetase family. Monomer.

Its subcellular location is the cytoplasm. The catalysed reaction is tRNA(Arg) + L-arginine + ATP = L-arginyl-tRNA(Arg) + AMP + diphosphate. The polypeptide is Arginine--tRNA ligase (Rippkaea orientalis (strain PCC 8801 / RF-1) (Cyanothece sp. (strain PCC 8801))).